The chain runs to 302 residues: Recombination-associated protein RdgC (302 aa).

This sequence belongs to the RdgC family.

It localises to the cytoplasm. It is found in the nucleoid. Functionally, may be involved in recombination. In Xanthomonas campestris pv. campestris (strain 8004), this protein is Recombination-associated protein RdgC.